Here is a 51-residue protein sequence, read N- to C-terminus: uncharacterized protein (51 aa).

This is an uncharacterized protein from Enterobacteria phage T4 (Bacteriophage T4).